We begin with the raw amino-acid sequence, 37 residues long: Large ribosomal subunit protein bL36c (37 aa).

Component of the chloroplast large ribosomal subunit (LSU). Mature 70S chloroplast ribosomes of higher plants consist of a small (30S) and a large (50S) subunit. The 30S small subunit contains 1 molecule of ribosomal RNA (16S rRNA) and 24 different proteins. The 50S large subunit contains 3 rRNA molecules (23S, 5S and 4.5S rRNA) and 33 different proteins.

It localises to the plastid. The protein localises to the chloroplast. In terms of biological role, component of the chloroplast ribosome (chloro-ribosome), a dedicated translation machinery responsible for the synthesis of chloroplast genome-encoded proteins, including proteins of the transcription and translation machinery and components of the photosynthetic apparatus. This chain is Large ribosomal subunit protein bL36c (rpl36), found in Spinacia oleracea (Spinach).